The chain runs to 478 residues: BTB/POZ domain-containing protein 17 (478 aa).

The first 28 residues, 1–28, serve as a signal peptide directing secretion; it reads MLRKGSCKPGSWGSFWAILALVGLVTRA. N61, N100, N195, and N307 each carry an N-linked (GlcNAc...) asparagine glycan. Residues 63 to 132 form the BTB domain; sequence SDVILRVQAV…LYCGELTVLL (70 aa). The 101-residue stretch at 169–269 folds into the BACK domain; sequence AVGWYHYAVS…IPPAQLFQLQ (101 aa).

It is found in the secreted. In Mus musculus (Mouse), this protein is BTB/POZ domain-containing protein 17 (Btbd17).